The following is a 1091-amino-acid chain: ATP-citrate synthase (1091 aa).

The region spanning 4–265 (KAISEQTGKE…LDAKSGASLK (262 aa)) is the ATP-grasp domain. ATP is bound by residues Lys58, Arg66, Gly67, Pro109, Val111, and Glu118. Position 131 is a phosphotyrosine (Tyr131). Residue Asp216 participates in ATP binding. Residues Asp257, Ser260, and Ala262 each contribute to the Mg(2+) site. Phosphoserine is present on Ser263. Gly309, Asn346, Thr348, Tyr364, and Arg379 together coordinate citrate. Residues 442–457 (SGSTSTPAPSRTASFS) show a composition bias toward low complexity. Residues 442–471 (SGSTSTPAPSRTASFSESRTDEVAPAKKAK) are disordered. At Thr447 the chain carries Phosphothreonine. Ser451 carries the phosphoserine modification. Ser455 is modified (phosphoserine; by PKA and PKB/AKT1 or PKB/AKT2 or BCKDK). Phosphoserine is present on Ser459. Residues Lys530, Lys536, and Lys544 each carry the N6-acetyllysine; alternate modification. Residues Lys530, Lys536, and Lys544 each participate in a glycyl lysine isopeptide (Lys-Gly) (interchain with G-Cter in ubiquitin); alternate cross-link. The residue at position 629 (Thr629) is a Phosphothreonine. Ser653 is modified (phosphoserine). Tyr672 carries the phosphotyrosine modification. The Tele-phosphohistidine intermediate role is filled by His750. 769-779 (LKEAGVFVPRS) serves as a coordination point for CoA. Position 829 is a phosphoserine (Ser829). Lys938, Lys958, Lys968, and Lys1067 each carry N6-acetyllysine. The residue at position 1090 (Ser1090) is a Phosphoserine.

The protein in the N-terminal section; belongs to the succinate/malate CoA ligase beta subunit family. This sequence in the C-terminal section; belongs to the succinate/malate CoA ligase alpha subunit family. Homotetramer. Mg(2+) is required as a cofactor. Post-translationally, phosphorylated by PKA and GSK3 in a sequential manner; phosphorylation results in activation of its activity. Phosphorylation on Thr-447 and Ser-451 depends on the phosphorylation state of Ser-455. Phosphorylation on Ser-455 is decreased by prior phosphorylation on the other 2 residues. Phosphorylated at Ser-455 by BCKDK and dephosphorylated by protein phosphatase PPM1K. In terms of processing, ISGylated. Acetylated at Lys-530, Lys-536 and Lys-544 by KAT2B/PCAF. Acetylation is promoted by glucose and stabilizes the protein, probably by preventing ubiquitination at the same sites. Acetylation promotes de novo lipid synthesis. Deacetylated by SIRT2. Post-translationally, ubiquitinated at Lys-530, Lys-536 and Lys-544 by the BCR(KLHL25) E3 ubiquitin ligase complex and UBR4, leading to its degradation. Ubiquitination is probably inhibited by acetylation at same site. BCR(KLHL25)-mediated degradation of ACLY promotes fatty acid oxidation and is required for differentiation of inducible regulatory T (iTreg) cells.

Its subcellular location is the cytoplasm. The protein localises to the cytosol. The catalysed reaction is oxaloacetate + acetyl-CoA + ADP + phosphate = citrate + ATP + CoA. Phosphorylation results in activation of its activity. Glucose 6-phosphate, fructose 6-phosphate, fructose 2,6-bisphosphate, ribulose 5-phosphate, and fructose 1,6-bisphosphate also act as activators. Its function is as follows. Catalyzes the cleavage of citrate into oxaloacetate and acetyl-CoA, the latter serving as common substrate in multiple biochemical reactions in protein, carbohydrate and lipid metabolism. This is ATP-citrate synthase (ACLY) from Bos taurus (Bovine).